Consider the following 382-residue polypeptide: Phosphatidylglycerol--prolipoprotein diacylglyceryl transferase (382 aa).

A run of 3 helical transmembrane segments spans residues 18–38 (IQWY…MFVF), 53–73 (FFIF…SFVI), and 91–111 (LAIQ…FNFF). Residue Arg-162 coordinates a 1,2-diacyl-sn-glycero-3-phospho-(1'-sn-glycerol). 4 helical membrane passes run 213 to 233 (IPLF…IYFV), 243 to 263 (GTIG…LENF), 274 to 294 (ITTS…CQFI), and 302 to 322 (FWTY…TTLF).

The protein belongs to the Lgt family.

The protein localises to the cell membrane. The enzyme catalyses L-cysteinyl-[prolipoprotein] + a 1,2-diacyl-sn-glycero-3-phospho-(1'-sn-glycerol) = an S-1,2-diacyl-sn-glyceryl-L-cysteinyl-[prolipoprotein] + sn-glycerol 1-phosphate + H(+). Its pathway is protein modification; lipoprotein biosynthesis (diacylglyceryl transfer). In terms of biological role, catalyzes the transfer of the diacylglyceryl group from phosphatidylglycerol to the sulfhydryl group of the N-terminal cysteine of a prolipoprotein, the first step in the formation of mature lipoproteins. The chain is Phosphatidylglycerol--prolipoprotein diacylglyceryl transferase from Mycoplasma genitalium (strain ATCC 33530 / DSM 19775 / NCTC 10195 / G37) (Mycoplasmoides genitalium).